A 355-amino-acid polypeptide reads, in one-letter code: Protein RecA (355 aa).

Residue 66 to 73 (GPESSGKT) coordinates ATP. Residues 331 to 355 (DVPEEDLPTTEDEQINILPDDSTEE) form a disordered region. Residues 332–344 (VPEEDLPTTEDEQ) are compositionally biased toward acidic residues.

The protein belongs to the RecA family.

It localises to the cytoplasm. Its function is as follows. Can catalyze the hydrolysis of ATP in the presence of single-stranded DNA, the ATP-dependent uptake of single-stranded DNA by duplex DNA, and the ATP-dependent hybridization of homologous single-stranded DNAs. It interacts with LexA causing its activation and leading to its autocatalytic cleavage. The polypeptide is Protein RecA (Latilactobacillus sakei subsp. sakei (strain 23K) (Lactobacillus sakei subsp. sakei)).